The sequence spans 950 residues: Serine/threonine-protein phosphatase 4 regulatory subunit 1 (950 aa).

9 HEAT repeats span residues 1-25 (MADL…DYSS), 26-63 (ESDV…IFNR), 65-81 (MVAR…CDDE), 82-119 (RDCI…FCQE), 127-164 (AFSK…QELI), 168-206 (DVET…MVGK), 208-246 (ITER…VVGQ), 248-285 (ATEE…ATCQ), and 287-324 (IRRT…TFAN). Disordered stretches follow at residues 326 to 374 (SSSG…SVSN), 413 to 438 (ESHQ…RPEV), and 473 to 499 (EQNS…SPNI). A compositionally biased stretch (basic and acidic residues) spans 332 to 365 (FKEESKSSEEMSVENKNRTRDQEAPEDVQVRPED). HEAT repeat units lie at residues 505–542 (KELE…LDAH), 568–606 (INQE…FSPD), 698–734 (LTAA…LLHI), 799–837 (WISY…RCPK), and 861–898 (QFAV…EKDY). Serine 935 is modified (phosphoserine).

In terms of assembly, serine/threonine-protein phosphatase 4 (PP4) occurs in different assemblies of the catalytic and one or more regulatory subunits. Component of the PP4 complex PPP4C-PPP4R1. Interacts with HDAC3. As to quaternary structure, (Microbial infection) Interacts with merkel polyomavirus small tumor antigen; this interaction bridges small tumor antigen with NEMO to inhibit NF-kappa-B. Widely expressed with high expression in cultured mesangial cells. Isoform 1 and isoform 2 are expressed in renal tissues.

Its function is as follows. Regulatory subunit of serine/threonine-protein phosphatase 4. May play a role in regulation of cell division in renal glomeruli. The PPP4C-PPP4R1 PP4 complex may play a role in dephosphorylation and regulation of HDAC3. Plays a role in the inhibition of TNF-induced NF-kappa-B activation by regulating the dephosphorylation of TRAF2. (Microbial infection) Participates in merkel polyomavirus-mediated inhibition of NF-kappa-B by bridging viral small tumor antigen with NEMO. The polypeptide is Serine/threonine-protein phosphatase 4 regulatory subunit 1 (PPP4R1) (Homo sapiens (Human)).